We begin with the raw amino-acid sequence, 1023 residues long: Sodium/potassium-transporting ATPase subunit alpha-1 (1023 aa).

Positions 1–5 are excised as a propeptide; the sequence is MGYGA. Over residues 1-11 the composition is skewed to basic and acidic residues; the sequence is MGYGAGRDKYE. A disordered region spans residues 1 to 34; it reads MGYGAGRDKYEPAATSEHGGKKGKGKGKDRDMEE. At 6-87 the chain is on the cytoplasmic side; that stretch reads GRDKYEPAAT…NALTPPPTTP (82 aa). Threonine 15 bears the Phosphothreonine; by PKC mark. Serine 16 is subject to Phosphoserine; by PKC. The interaction with phosphoinositide-3 kinase stretch occupies residues 82–84; the sequence is PPP. Residues 88–108 form a helical membrane-spanning segment; sequence EWVKFCRQLFGGFSMLLWIGA. The Extracellular segment spans residues 109 to 131; sequence ILCFLAYGIRKASDLEPDNDNLY. A helical membrane pass occupies residues 132-152; the sequence is LGVVLSAVVIITGCFSYYQEA. Residues 153 to 288 lie on the Cytoplasmic side of the membrane; it reads KSSRIMESFK…GGQTPIAVEI (136 aa). The interval 215 to 235 is disordered; it reads NSSLTGESEPQTRSPDFTNEN. A helical membrane pass occupies residues 289–308; sequence GHFIHIITGVAVFLGVSFFI. The Extracellular portion of the chain corresponds to 309 to 320; the sequence is LSLILHYTWLEA. Residues 321–338 traverse the membrane as a helical segment; the sequence is VIFLIGIIVANVPEGLLA. The Cytoplasmic segment spans residues 339–772; that stretch reads TVTVCLTLTA…EEGRLIFDNL (434 aa). The active-site 4-aspartylphosphate intermediate is aspartate 376. Lysine 487 contributes to the ATP binding site. Residues aspartate 717 and aspartate 721 each contribute to the Mg(2+) site. A helical transmembrane segment spans residues 773-792; sequence KKSIAYTLTSNIPEITPFLI. The Extracellular segment spans residues 793–802; it reads FIIADIPLPL. Residues 803 to 823 form a helical membrane-spanning segment; the sequence is GTVTILCIDLGTDMVPAISLA. Residues 824 to 843 lie on the Cytoplasmic side of the membrane; it reads YEQAESDIMKRQPRNPKKDK. Residues 844–866 form a helical membrane-spanning segment; sequence LVNERLISMAYGQIGMIQALGGF. The Extracellular segment spans residues 867–918; it reads FAYFVILAENGFLPSTLLGIRVAWEDRYVNDVEDSYGQQWTYEQRKIVEFTC. Residues 919 to 938 form a helical membrane-spanning segment; the sequence is HTAFFVSIVVVQWADLIICK. The Cytoplasmic portion of the chain corresponds to 939-951; the sequence is TRRNSVFQQGMKN. The residue at position 943 (serine 943) is a Phosphoserine; by PKA. The helical transmembrane segment at 952-970 threads the bilayer; that stretch reads KILIFGLFEETALAAFLSY. At 971–985 the chain is on the extracellular side; it reads CPGMDVALRMYPLKP. Residues 986–1006 form a helical membrane-spanning segment; it reads TWWFCAFPYSLLIFIYDEVRK. At 1007–1023 the chain is on the cytoplasmic side; that stretch reads LILRRSPGGWVEKETYY.

Belongs to the cation transport ATPase (P-type) (TC 3.A.3) family. Type IIC subfamily. As to quaternary structure, the sodium/potassium-transporting ATPase is composed of a catalytic alpha subunit, an auxiliary non-catalytic beta subunit and an additional regulatory subunit. Mainly expressed in kidney. Found in bladder, colon, eye, and testis. Found in low levels in brain, heart, spleen and liver.

It is found in the cell membrane. It localises to the sarcolemma. The catalysed reaction is K(+)(out) + Na(+)(in) + ATP + H2O = K(+)(in) + Na(+)(out) + ADP + phosphate + H(+). Its activity is regulated as follows. This alpha subunit is resistant to ouabain. This is the catalytic component of the active enzyme, which catalyzes the hydrolysis of ATP coupled with the exchange of sodium and potassium ions across the plasma membrane. This action creates the electrochemical gradient of sodium and potassium ions, providing the energy for active transport of various nutrients. In Rhinella marina (Cane toad), this protein is Sodium/potassium-transporting ATPase subunit alpha-1 (ATP1A1).